We begin with the raw amino-acid sequence, 455 residues long: Bifunctional protein GlmU (455 aa).

A pyrophosphorylase region spans residues 1 to 226 (MSLDIVILAA…AMEVQGANDR (226 aa)). Residues 8 to 11 (LAAG), K22, Q73, 78 to 79 (GT), 99 to 101 (YGD), G136, E151, N166, and N224 contribute to the UDP-N-acetyl-alpha-D-glucosamine site. Position 101 (D101) interacts with Mg(2+). N224 provides a ligand contact to Mg(2+). The tract at residues 227-247 (KQLSELERHYQLREARRLMAA) is linker. The tract at residues 248 to 455 (GVTLRDPSRF…WKRPVKITKD (208 aa)) is N-acetyltransferase. Residues R330 and K348 each contribute to the UDP-N-acetyl-alpha-D-glucosamine site. The Proton acceptor role is filled by H360. The UDP-N-acetyl-alpha-D-glucosamine site is built by Y363 and N374. Acetyl-CoA contacts are provided by residues A377, 383–384 (NY), S402, A420, and R437.

It in the N-terminal section; belongs to the N-acetylglucosamine-1-phosphate uridyltransferase family. The protein in the C-terminal section; belongs to the transferase hexapeptide repeat family. As to quaternary structure, homotrimer. Mg(2+) is required as a cofactor.

It localises to the cytoplasm. It carries out the reaction alpha-D-glucosamine 1-phosphate + acetyl-CoA = N-acetyl-alpha-D-glucosamine 1-phosphate + CoA + H(+). The catalysed reaction is N-acetyl-alpha-D-glucosamine 1-phosphate + UTP + H(+) = UDP-N-acetyl-alpha-D-glucosamine + diphosphate. Its pathway is nucleotide-sugar biosynthesis; UDP-N-acetyl-alpha-D-glucosamine biosynthesis; N-acetyl-alpha-D-glucosamine 1-phosphate from alpha-D-glucosamine 6-phosphate (route II): step 2/2. It functions in the pathway nucleotide-sugar biosynthesis; UDP-N-acetyl-alpha-D-glucosamine biosynthesis; UDP-N-acetyl-alpha-D-glucosamine from N-acetyl-alpha-D-glucosamine 1-phosphate: step 1/1. It participates in bacterial outer membrane biogenesis; LPS lipid A biosynthesis. Catalyzes the last two sequential reactions in the de novo biosynthetic pathway for UDP-N-acetylglucosamine (UDP-GlcNAc). The C-terminal domain catalyzes the transfer of acetyl group from acetyl coenzyme A to glucosamine-1-phosphate (GlcN-1-P) to produce N-acetylglucosamine-1-phosphate (GlcNAc-1-P), which is converted into UDP-GlcNAc by the transfer of uridine 5-monophosphate (from uridine 5-triphosphate), a reaction catalyzed by the N-terminal domain. This chain is Bifunctional protein GlmU, found in Pseudomonas syringae pv. tomato (strain ATCC BAA-871 / DC3000).